Reading from the N-terminus, the 654-residue chain is Fatty acid photodecarboxylase, chloroplastic (654 aa).

The N-terminal 62 residues, methionine 1–alanine 62, are a transit peptide targeting the chloroplast. Residues threonine 93–alanine 94, glutamate 114, leucine 162, serine 166, asparagine 170–leucine 173, and valine 298 each bind FAD. Hexadecanoate is bound by residues cysteine 432, arginine 451, tyrosine 466, and glutamine 486. Glycine 622 serves as a coordination point for FAD.

Belongs to the GMC oxidoreductase family. FAD is required as a cofactor.

The protein localises to the plastid. Its subcellular location is the chloroplast. The catalysed reaction is a long-chain fatty acid + hnu + H(+) = a long-chain alkane + CO2. It catalyses the reaction hnu + hexadecanoate + H(+) = pentadecane + CO2. The enzyme catalyses hnu + octadecanoate + H(+) = heptadecane + CO2. It carries out the reaction heptadecanoate + hnu + H(+) = hexadecane + CO2. The catalysed reaction is hnu + tetradecanoate + H(+) = tridecane + CO2. It catalyses the reaction octanoate + hnu + H(+) = heptane + CO2. Activated by blue light and repressed by red light. Its function is as follows. Catalyzes the decarboxylation of free fatty acids to n-alkanes or n-alkenes in response to blue light. Substrate preference is toward fatty acids with C16 or C17 chains. Converts n-octanoic acid (C8 chain) more efficiently than palmitate (n-hexadecanoic acid, C16 chain) into n-heptane (C7 chain) and n-pentadecane (C15 chain), respectively, partly due to an autocatalytic effect of its n-heptane product. Saturated fatty acids are converted to alkanes, not alkenes. The decarboxylation is initiated through electron abstraction from the fatty acid by the photo-excited FAD. This Chlorella variabilis (Green alga) protein is Fatty acid photodecarboxylase, chloroplastic.